The primary structure comprises 183 residues: ATP synthase subunit delta (183 aa).

The protein belongs to the ATPase delta chain family. In terms of assembly, F-type ATPases have 2 components, F(1) - the catalytic core - and F(0) - the membrane proton channel. F(1) has five subunits: alpha(3), beta(3), gamma(1), delta(1), epsilon(1). F(0) has three main subunits: a(1), b(2) and c(10-14). The alpha and beta chains form an alternating ring which encloses part of the gamma chain. F(1) is attached to F(0) by a central stalk formed by the gamma and epsilon chains, while a peripheral stalk is formed by the delta and b chains.

The protein resides in the cell inner membrane. Its function is as follows. F(1)F(0) ATP synthase produces ATP from ADP in the presence of a proton or sodium gradient. F-type ATPases consist of two structural domains, F(1) containing the extramembraneous catalytic core and F(0) containing the membrane proton channel, linked together by a central stalk and a peripheral stalk. During catalysis, ATP synthesis in the catalytic domain of F(1) is coupled via a rotary mechanism of the central stalk subunits to proton translocation. This protein is part of the stalk that links CF(0) to CF(1). It either transmits conformational changes from CF(0) to CF(1) or is implicated in proton conduction. The protein is ATP synthase subunit delta of Desulfovibrio desulfuricans (strain ATCC 27774 / DSM 6949 / MB).